A 212-amino-acid polypeptide reads, in one-letter code: ATP phosphoribosyltransferase (212 aa).

It belongs to the ATP phosphoribosyltransferase family. Short subfamily. As to quaternary structure, heteromultimer composed of HisG and HisZ subunits.

Its subcellular location is the cytoplasm. It carries out the reaction 1-(5-phospho-beta-D-ribosyl)-ATP + diphosphate = 5-phospho-alpha-D-ribose 1-diphosphate + ATP. The protein operates within amino-acid biosynthesis; L-histidine biosynthesis; L-histidine from 5-phospho-alpha-D-ribose 1-diphosphate: step 1/9. Functionally, catalyzes the condensation of ATP and 5-phosphoribose 1-diphosphate to form N'-(5'-phosphoribosyl)-ATP (PR-ATP). Has a crucial role in the pathway because the rate of histidine biosynthesis seems to be controlled primarily by regulation of HisG enzymatic activity. In Clostridium botulinum (strain Okra / Type B1), this protein is ATP phosphoribosyltransferase.